The sequence spans 404 residues: Acetate kinase (404 aa).

Asn-7 is a binding site for Mg(2+). Position 14 (Lys-14) interacts with ATP. A substrate-binding site is contributed by Arg-95. Asp-152 serves as the catalytic Proton donor/acceptor. ATP-binding positions include 212–216 (HLGNG), 286–288 (DMR), and 334–338 (GIGEN). Glu-388 lines the Mg(2+) pocket.

This sequence belongs to the acetokinase family. In terms of assembly, homodimer. Mg(2+) serves as cofactor. Requires Mn(2+) as cofactor.

It localises to the cytoplasm. It catalyses the reaction acetate + ATP = acetyl phosphate + ADP. Its pathway is metabolic intermediate biosynthesis; acetyl-CoA biosynthesis; acetyl-CoA from acetate: step 1/2. Catalyzes the formation of acetyl phosphate from acetate and ATP. Can also catalyze the reverse reaction. This chain is Acetate kinase, found in Lawsonia intracellularis (strain PHE/MN1-00).